Reading from the N-terminus, the 334-residue chain is Formamidase (334 aa).

Residues 14–260 enclose the CN hydrolase domain; the sequence is FLVAAIQFPV…WEIVTGEIYP (247 aa). Glu-60 serves as the catalytic Proton acceptor. Lys-133 (proton donor) is an active-site residue. Residue Cys-166 is the Nucleophile of the active site.

Belongs to the carbon-nitrogen hydrolase superfamily. Aliphatic amidase family.

It catalyses the reaction formamide + H2O = formate + NH4(+). Functionally, is an aliphatic amidase with a restricted substrate specificity, as it only hydrolyzes formamide. This is Formamidase from Helicobacter pylori (strain Shi470).